The chain runs to 201 residues: Recombination protein RecR (201 aa).

Residues 57 to 72 (CKYCRTFTEQEQCTIC) form a C4-type zinc finger. Positions 81–176 (GQICVVESPA…TASRIAHGVP (96 aa)) constitute a Toprim domain.

Belongs to the RecR family.

Its function is as follows. May play a role in DNA repair. It seems to be involved in an RecBC-independent recombinational process of DNA repair. It may act with RecF and RecO. This chain is Recombination protein RecR, found in Photorhabdus laumondii subsp. laumondii (strain DSM 15139 / CIP 105565 / TT01) (Photorhabdus luminescens subsp. laumondii).